Here is an 866-residue protein sequence, read N- to C-terminus: DNA topoisomerase 3-beta (866 aa).

The Toprim domain occupies 4 to 149 (TVLMVAEKPS…RIFRAKFSSV (146 aa)). Glutamate 10, aspartate 114, and aspartate 116 together coordinate Mg(2+). The 421-residue stretch at 165–585 (SKDEALAVDA…HVLQQFMKKY (421 aa)) folds into the Topo IA-type catalytic domain. Residues 207 to 212 (SYGPCQ) are interaction with DNA. The O-(5'-phospho-DNA)-tyrosine intermediate role is filled by tyrosine 329. Basic residues predominate over residues 830 to 853 (MRRGRGRGRGRGRGRGSSRGRRGS). The interval 830–866 (MRRGRGRGRGRGRGRGSSRGRRGSSRHDDPKMSFRDF) is disordered. Over residues 854-866 (SRHDDPKMSFRDF) the composition is skewed to basic and acidic residues.

The protein belongs to the type IA topoisomerase family. Mg(2+) serves as cofactor.

It catalyses the reaction ATP-independent breakage of single-stranded DNA, followed by passage and rejoining.. Releases the supercoiling and torsional tension of DNA introduced during the DNA replication and transcription by transiently cleaving and rejoining one strand of the DNA duplex. Introduces a single-strand break via transesterification at a target site in duplex DNA. The scissile phosphodiester is attacked by the catalytic tyrosine of the enzyme, resulting in the formation of a DNA-(5'-phosphotyrosyl)-enzyme intermediate and the expulsion of a 3'-OH DNA strand. The free DNA strand than undergoes passage around the unbroken strand thus removing DNA supercoils. Finally, in the religation step, the DNA 3'-OH attacks the covalent intermediate to expel the active-site tyrosine and restore the DNA phosphodiester backbone. In Oryza sativa subsp. japonica (Rice), this protein is DNA topoisomerase 3-beta (TOP3B).